The chain runs to 150 residues: Protein E6 (150 aa).

Zinc fingers lie at residues Cys30–Cys66 and Cys103–Cys139. A PDZ-binding domain motif is present at residues Thr148 to Val150.

It belongs to the papillomaviridae E6 protein family. Forms homodimers. Interacts with ubiquitin-protein ligase UBE3A/E6-AP and thus forms a complex with human TP53. Interacts with human NFX1 and MAGI3. Interacts with human IRF3; this interaction inhibits the establishment of antiviral state. Interacts with human TYK2; this interaction inhibits JAK-STAT activation by interferon alpha. Interacts with host DLG1; this interaction leads to the proteasomal degradation of DLG1.

It is found in the host cytoplasm. The protein localises to the host nucleus. Its function is as follows. Plays a major role in the induction and maintenance of cellular transformation. Acts mainly as an oncoprotein by stimulating the destruction of many host cell key regulatory proteins. E6 associates with host UBE3A/E6-AP ubiquitin-protein ligase, and inactivates tumor suppressors TP53 and TP73 by targeting them to the 26S proteasome for degradation. In turn, DNA damage and chromosomal instabilities increase and lead to cell proliferation and cancer development. The complex E6/E6AP targets several other substrates to degradation via the proteasome including host DLG1 or NFX1, a repressor of human telomerase reverse transcriptase (hTERT). The resulting increased expression of hTERT prevents the shortening of telomere length leading to cell immortalization. Other cellular targets including BAK1, Fas-associated death domain-containing protein (FADD) and procaspase 8, are degraded by E6/E6AP causing inhibition of apoptosis. E6 also inhibits immune response by interacting with host IRF3 and TYK2. These interactions prevent IRF3 transcriptional activities and inhibit TYK2-mediated JAK-STAT activation by interferon alpha resulting in inhibition of the interferon signaling pathway. The polypeptide is Protein E6 (Human papillomavirus type 26).